The primary structure comprises 119 residues: Large ribosomal subunit protein bL19 (119 aa).

The protein belongs to the bacterial ribosomal protein bL19 family.

This protein is located at the 30S-50S ribosomal subunit interface and may play a role in the structure and function of the aminoacyl-tRNA binding site. The protein is Large ribosomal subunit protein bL19 of Sulfurovum sp. (strain NBC37-1).